Here is a 235-residue protein sequence, read N- to C-terminus: Large ribosomal subunit protein uL1 (235 aa).

The segment at 1 to 22 is disordered; that stretch reads MSKNSKAYRAAAEKVDRSNPYT.

The protein belongs to the universal ribosomal protein uL1 family. In terms of assembly, part of the 50S ribosomal subunit.

In terms of biological role, binds directly to 23S rRNA. The L1 stalk is quite mobile in the ribosome, and is involved in E site tRNA release. Protein L1 is also a translational repressor protein, it controls the translation of the L11 operon by binding to its mRNA. This chain is Large ribosomal subunit protein uL1, found in Mycobacterium ulcerans (strain Agy99).